A 268-amino-acid chain; its full sequence is Tryptophan synthase alpha chain (268 aa).

Residues Glu-49 and Asp-60 each act as proton acceptor in the active site.

It belongs to the TrpA family. As to quaternary structure, tetramer of two alpha and two beta chains.

It catalyses the reaction (1S,2R)-1-C-(indol-3-yl)glycerol 3-phosphate + L-serine = D-glyceraldehyde 3-phosphate + L-tryptophan + H2O. Its pathway is amino-acid biosynthesis; L-tryptophan biosynthesis; L-tryptophan from chorismate: step 5/5. The alpha subunit is responsible for the aldol cleavage of indoleglycerol phosphate to indole and glyceraldehyde 3-phosphate. This chain is Tryptophan synthase alpha chain, found in Haemophilus influenzae (strain 86-028NP).